Here is a 172-residue protein sequence, read N- to C-terminus: MVSNWNWNGMKRRRTPRRGYGRPYKPVVPITRVVVHQSALLKKDEVVGCEIKPDGDVARYKMMKVMLTCTLRMPPGELVNYIIVKSSSPIANWSAAFTTPALLVKESCQDMISIIAKGKVESNGVAGTDCTKSFNKFIRLGAGISQTQHLYVVMYTSVALKLVLEHRVYIEL.

It belongs to the nanoviridae capsid protein family.

The protein resides in the virion. The sequence is that of Capsid protein (DNA-S) from Astragalus sinicus (Chinese milk vetch).